The following is a 716-amino-acid chain: Protein C-mannosyl-transferase DPY19L3 (716 aa).

Over 1–43 (MMYIRQRKETKPIEVSEDFPSPKEDVKLEKKLPSGCASGRFWK) the chain is Cytoplasmic. The chain crosses the membrane as a helical span at residues 44–64 (ILSSAVGGTVALCIGLLTSVY). Residues 65–154 (LATLHENDLW…RVLPIQKYLE (90 aa)) are Lumenal-facing. Asn118 is a glycosylation site (N-linked (GlcNAc...) asparagine). Residues 155–182 (PVYFYIYTLFGLQAVYVTALYITSWLLS) traverse the membrane as a helical segment. The Cytoplasmic portion of the chain corresponds to 183–184 (GT). An intramembrane region (name=3) is located at residues 185 to 197 (WLSGLLAALWYVT). Residues 198–215 (NRIDTTRVEFTIPLRENW) lie on the Cytoplasmic side of the membrane. The segment at residues 216-230 (ALPFFAIQIAAITYF) is an intramembrane region (name=4). Over 231 to 239 (LRPNLQPLS) the chain is Cytoplasmic. Residues 240-256 (ERLTLLAIFVSTFLFSL) form a helical membrane-spanning segment. The Lumenal portion of the chain corresponds to 257–262 (TWQFNQ). Residues 263–279 (FMMLLQALVLFILDSLD) form a helical membrane-spanning segment. Residues 280 to 289 (MLPAMKATWL) lie on the Cytoplasmic side of the membrane. A helical membrane pass occupies residues 290–306 (YGIQISCLLLVCTLQFF). At 307-308 (NS) the chain is on the lumenal side. A helical membrane pass occupies residues 309-323 (MILGSLLISFNLSVL). At 324 to 338 (IVRKLQKNLKTGSFL) the chain is on the cytoplasmic side. A helical transmembrane segment spans residues 339–359 (TRIWKLLLHLLLVFCLTLFLN). At 360–414 (NIIKKVLNLKSDEHIFKFLKAKFGFGATRDFDANLYLCEEAFGLLPLNTFQRLSE) the chain is on the lumenal side. Residues 415 to 437 (TLLFYAYMFVLVVTVVTASVVAF) form a helical membrane-spanning segment. Topologically, residues 438-465 (HNLSDSTSLKSMDQTRKRAVDLKPEAAY) are cytoplasmic. Residues 466 to 485 (NLIHTILFGVLALSTMRMKY) traverse the membrane as a helical segment. At 486–487 (LW) the chain is on the lumenal side. A helical transmembrane segment spans residues 488–499 (TSHMCVFASFGL). Over 500-522 (CSSEVWELLLRLVHLCNPKRIWV) the chain is Cytoplasmic. A helical membrane pass occupies residues 523-539 (LRYLVPVLTLLYLCYKS). Residues 540–716 (WPGVMDELSE…FHVYKLSRNK (177 aa)) are Lumenal-facing. Residue Asn704 is glycosylated (N-linked (GlcNAc...) asparagine).

This sequence belongs to the dpy-19 family.

The protein resides in the endoplasmic reticulum membrane. The enzyme catalyses L-tryptophyl-[protein] + a di-trans,poly-cis-dolichyl beta-D-mannosyl phosphate = C-alpha-D-mannosyl-L-tryptophyl-[protein] + a di-trans,poly-cis-dolichyl phosphate + H(+). It participates in protein modification; protein glycosylation. In terms of biological role, C-mannosyltransferase that mediates C-mannosylation of tryptophan residues on target proteins. The reaction occurs on the luminal side of the endoplasmic reticulum and involves the transfer of a mannose unit from a dolichylphosphate mannose (Dol-P-Man) donor to an acceptor protein containing a WxxW or WxxC consensus sequence. C-mannosylates RSPO1, a Wnt signaling regulator, preferentially at the first Trp residue in the sequence WxxW. C-mannosylates the netrin receptor UNC5A, preferentially at the third tryptophan of WxxWxxWxxC sequence. The polypeptide is Protein C-mannosyl-transferase DPY19L3 (Dpy19l3) (Mus musculus (Mouse)).